The following is a 110-amino-acid chain: Competence pilus inhibition repressor (110 aa).

The 55-residue stretch at 7–61 (VRFLRKRQGWTQQQLADFSHTSKSNISNLENGNQGYSPAILEYLAKAFNCSVSQI) folds into the HTH cro/C1-type domain. The segment at residues 18-37 (QQQLADFSHTSKSNISNLEN) is a DNA-binding region (H-T-H motif).

Functionally, represses transcription of the PilB-specific inhibitory protein CpiA. In Acinetobacter baylyi (strain ATCC 33305 / BD413 / ADP1), this protein is Competence pilus inhibition repressor.